We begin with the raw amino-acid sequence, 384 residues long: 1-deoxy-D-xylulose 5-phosphate reductoisomerase (384 aa).

NADPH is bound by residues threonine 11, glycine 12, serine 13, isoleucine 14, lysine 38, and asparagine 123. Lysine 124 contributes to the 1-deoxy-D-xylulose 5-phosphate binding site. Glutamate 125 provides a ligand contact to NADPH. Aspartate 148 serves as a coordination point for Mn(2+). 1-deoxy-D-xylulose 5-phosphate contacts are provided by serine 149, glutamate 150, serine 174, and histidine 197. Glutamate 150 contributes to the Mn(2+) binding site. Glycine 203 provides a ligand contact to NADPH. 1-deoxy-D-xylulose 5-phosphate is bound by residues serine 210, asparagine 215, lysine 216, and glutamate 219. Glutamate 219 is a Mn(2+) binding site.

It belongs to the DXR family. Mg(2+) is required as a cofactor. The cofactor is Mn(2+).

The enzyme catalyses 2-C-methyl-D-erythritol 4-phosphate + NADP(+) = 1-deoxy-D-xylulose 5-phosphate + NADPH + H(+). The protein operates within isoprenoid biosynthesis; isopentenyl diphosphate biosynthesis via DXP pathway; isopentenyl diphosphate from 1-deoxy-D-xylulose 5-phosphate: step 1/6. In terms of biological role, catalyzes the NADPH-dependent rearrangement and reduction of 1-deoxy-D-xylulose-5-phosphate (DXP) to 2-C-methyl-D-erythritol 4-phosphate (MEP). This is 1-deoxy-D-xylulose 5-phosphate reductoisomerase from Halothermothrix orenii (strain H 168 / OCM 544 / DSM 9562).